The primary structure comprises 953 residues: Lysosomal alpha-glucosidase (953 aa).

An N-terminal signal peptide occupies residues 1 to 27 (MNIRKPLCSNSVVGACTLVSLTTAVIL). The propeptide occupies 28 to 69 (GHLMLRELMLLPQDLHESSSGLWKTYRPHHQESYEPAPLHIQ). In terms of domain architecture, P-type spans 80–131 (TQCDVTPNSRFDCAPDKGITQEQCEARGCCWVPAGQVLNGPVMGQPWCFFPP). Disulfide bonds link Cys82–Cys109, Cys92–Cys108, and Cys103–Cys127. N-linked (GlcNAc...) asparagine glycans are attached at residues Asn140, Asn233, and Asn390. Asp404 provides a ligand contact to substrate. N-linked (GlcNAc...) asparagine glycosylation is present at Asn470. Asp518 functions as the Nucleophile in the catalytic mechanism. Glu521 is an active-site residue. A disulfide bridge links Cys533 with Cys558. Positions 600 and 616 each coordinate substrate. Cys647 and Cys658 form a disulfide bridge. Asn652 carries an N-linked (GlcNAc...) asparagine glycan. Substrate is bound at residue His674. Asn883 and Asn926 each carry an N-linked (GlcNAc...) asparagine glycan.

This sequence belongs to the glycosyl hydrolase 31 family.

The protein resides in the lysosome. The protein localises to the lysosome membrane. It catalyses the reaction Hydrolysis of terminal, non-reducing (1-&gt;4)-linked alpha-D-glucose residues with release of alpha-D-glucose.. Its function is as follows. Essential for the degradation of glycogen in lysosomes. Has highest activity on alpha-1,4-linked glycosidic linkages, but can also hydrolyze alpha-1,6-linked glucans. The chain is Lysosomal alpha-glucosidase (Gaa) from Rattus norvegicus (Rat).